Reading from the N-terminus, the 311-residue chain is tRNA-cytidine(32) 2-sulfurtransferase (311 aa).

The PP-loop motif motif lies at 47–52 (SGGKDS). [4Fe-4S] cluster-binding residues include Cys122, Cys125, and Cys213.

It belongs to the TtcA family. As to quaternary structure, homodimer. The cofactor is Mg(2+). [4Fe-4S] cluster serves as cofactor.

The protein localises to the cytoplasm. The catalysed reaction is cytidine(32) in tRNA + S-sulfanyl-L-cysteinyl-[cysteine desulfurase] + AH2 + ATP = 2-thiocytidine(32) in tRNA + L-cysteinyl-[cysteine desulfurase] + A + AMP + diphosphate + H(+). It participates in tRNA modification. Catalyzes the ATP-dependent 2-thiolation of cytidine in position 32 of tRNA, to form 2-thiocytidine (s(2)C32). The sulfur atoms are provided by the cysteine/cysteine desulfurase (IscS) system. In Pectobacterium carotovorum subsp. carotovorum (strain PC1), this protein is tRNA-cytidine(32) 2-sulfurtransferase.